Consider the following 295-residue polypeptide: GDP-polyphosphate phosphotransferase (295 aa).

Positions 1-28 are disordered; that stretch reads MDIPSVDVSTATNDGASSRAKGHRSAAP. Positions 7–16 are enriched in polar residues; that stretch reads DVSTATNDGA. Phosphohistidine occurs at positions 115 and 247.

Belongs to the polyphosphate kinase 2 (PPK2) family. Class I subfamily. As to quaternary structure, interacts with Ndk. In terms of processing, autophosphorylated at His-115 and His-247 using polyP as a phosphate donor.

It catalyses the reaction [phosphate](n) + GTP = [phosphate](n+1) + GDP. Its function is as follows. Uses inorganic polyphosphate (polyP) as a donor to convert GDP to GTP. In addition, modulates nucleotide triphosphate synthesis catalyzed by the nucleoside diphosphate kinase (Ndk) in favor of GTP production over CTP or UTP. Plays an important role in survival of M.tuberculosis in macrophages. The chain is GDP-polyphosphate phosphotransferase from Mycobacterium tuberculosis (strain ATCC 25618 / H37Rv).